Reading from the N-terminus, the 124-residue chain is Histone H2A (124 aa).

The span at 1-18 (MSGRGKGGKAKGKSKSRS) shows a compositional bias: basic residues. Positions 1–23 (MSGRGKGGKAKGKSKSRSSRAGL) are disordered. At S2 the chain carries N-acetylserine. S2 is modified (phosphoserine). Q104 is modified (N5-methylglutamine).

Belongs to the histone H2A family. As to quaternary structure, the nucleosome is a histone octamer containing two molecules each of H2A, H2B, H3 and H4 assembled in one H3-H4 heterotetramer and two H2A-H2B heterodimers. The octamer wraps approximately 147 bp of DNA. In terms of processing, the N-terminal serine is acetylated. That serine is also phosphorylated in approximately 60% of the molecules isolated from erythrocytes.

Its subcellular location is the nucleus. It localises to the chromosome. Its function is as follows. Core component of nucleosome. Nucleosomes wrap and compact DNA into chromatin, limiting DNA accessibility to the cellular machineries which require DNA as a template. Histones thereby play a central role in transcription regulation, DNA repair, DNA replication and chromosomal stability. DNA accessibility is regulated via a complex set of post-translational modifications of histones, also called histone code, and nucleosome remodeling. The sequence is that of Histone H2A from Sipunculus nudus (Sipunculan worm).